Here is a 931-residue protein sequence, read N- to C-terminus: GPI ethanolamine phosphate transferase 1 (931 aa).

Residue Met1 is a topological domain, cytoplasmic. A helical membrane pass occupies residues Leu2–Ile22. Over Tyr23–Phe442 the chain is Lumenal. Residues Asn128, Asn192, Asn295, and Asn350 are each glycosylated (N-linked (GlcNAc...) asparagine). A helical transmembrane segment spans residues Leu443–Ile463. The Cytoplasmic segment spans residues Lys464–Pro480. The chain crosses the membrane as a helical span at residues His481–Ile501. Gln502 is a topological domain (lumenal). The helical transmembrane segment at Ala503 to Leu523 threads the bilayer. The Cytoplasmic segment spans residues Arg524–His543. The chain crosses the membrane as a helical span at residues Phe544–Tyr564. Position 565 (Arg565) is a topological domain, lumenal. Residues Tyr566–Thr586 traverse the membrane as a helical segment. Topologically, residues Arg587–Thr591 are cytoplasmic. Residues Phe592–Gly612 traverse the membrane as a helical segment. Over Arg613 to Ser618 the chain is Lumenal. N-linked (GlcNAc...) asparagine glycosylation occurs at Asn616. A helical transmembrane segment spans residues Leu619–Gly639. Over Lys640–Glu649 the chain is Cytoplasmic. A helical membrane pass occupies residues Leu650 to Thr670. Topologically, residues His671–Gln685 are lumenal. A helical transmembrane segment spans residues Ile686–Leu706. The Cytoplasmic segment spans residues Ser707–Leu723. Residues Leu724–Ile744 form a helical membrane-spanning segment. At Gln745 to Arg786 the chain is on the lumenal side. The helical transmembrane segment at Ala787 to Ile807 threads the bilayer. Residues Asn808 to Pro824 are Cytoplasmic-facing. A helical membrane pass occupies residues Phe825–Ala845. Residues Phe846–Lys858 are Lumenal-facing. A helical transmembrane segment spans residues Gly859 to Val879. Over Lys880–His894 the chain is Cytoplasmic. Residues Tyr895 to Leu915 traverse the membrane as a helical segment. At Thr916 to Met931 the chain is on the lumenal side.

The protein belongs to the PIGG/PIGN/PIGO family. PIGN subfamily.

It localises to the endoplasmic reticulum membrane. Its pathway is glycolipid biosynthesis; glycosylphosphatidylinositol-anchor biosynthesis. Its function is as follows. Ethanolamine phosphate transferase that catalyzes an ethanolamine phosphate (EtNP) transfer from phosphatidylethanolamine (PE) to the 2-OH position of the first alpha-1,4-linked mannose of the alpha-D-Man-(1-&gt;6)-alpha-D-Man-(1-&gt;4)-alpha-D-GlcN-(1-&gt;6)-(1-radyl,2-acyl-sn-glycero-3-phospho)-2-acyl-inositol (also termed H3) intermediate to generate an alpha-D-Man-(1-&gt;6)-2-PEtn-alpha-D-Man-(1-&gt;4)-alpha-D-GlcN-(1-&gt;6)-(1-radyl,2-acyl-sn-glycero-3-phospho)-2-acyl-inositol and participates in the eighth step of the glycosylphosphatidylinositol-anchor biosynthesis. May act as suppressor of replication stress and chromosome missegregation. The sequence is that of GPI ethanolamine phosphate transferase 1 from Mus musculus (Mouse).